Here is a 206-residue protein sequence, read N- to C-terminus: Large ribosomal subunit protein bL25 (206 aa).

It belongs to the bacterial ribosomal protein bL25 family. CTC subfamily. In terms of assembly, part of the 50S ribosomal subunit; part of the 5S rRNA/L5/L18/L25 subcomplex. Contacts the 5S rRNA. Binds to the 5S rRNA independently of L5 and L18.

Its function is as follows. This is one of the proteins that binds to the 5S RNA in the ribosome where it forms part of the central protuberance. The polypeptide is Large ribosomal subunit protein bL25 (Bartonella henselae (strain ATCC 49882 / DSM 28221 / CCUG 30454 / Houston 1) (Rochalimaea henselae)).